The following is a 336-amino-acid chain: UbiA prenyltransferase domain-containing protein 1 (336 aa).

A disordered region spans residues M1 to S22. Over residues A7–S22 the composition is skewed to low complexity. 7 helical membrane passes run L79–V99, V129–F149, L158–L178, Y180–A200, H201–L221, L254–A274, and L315–L335.

Belongs to the UbiA prenyltransferase family.

Its subcellular location is the endoplasmic reticulum membrane. It localises to the golgi apparatus membrane. The protein resides in the mitochondrion membrane. The enzyme catalyses menadiol + (2E,6E,10E)-geranylgeranyl diphosphate = menaquinol-4 + diphosphate. The catalysed reaction is all-trans-decaprenyl diphosphate + 4-hydroxybenzoate = 4-hydroxy-3-(all-trans-decaprenyl)benzoate + diphosphate. The protein operates within quinol/quinone metabolism; menaquinone biosynthesis. It functions in the pathway cofactor biosynthesis; ubiquinone biosynthesis. Its function is as follows. Prenyltransferase that mediates the formation of menaquinone-4 (MK-4) and coenzyme Q10. MK-4 is a vitamin K2 isoform required for endothelial cell development. Mediates the conversion of phylloquinone (PK) into MK-4, probably by cleaving the side chain of phylloquinone (PK) to release 2-methyl-1,4-naphthoquinone (menadione; K3) and then prenylating it with geranylgeranyl pyrophosphate (GGPP) to form MK-4. Also plays a role in cardiovascular development independently of MK-4 biosynthesis, by acting as a coenzyme Q10 biosynthetic enzyme: coenzyme Q10, also named ubiquinone, plays an important antioxidant role in the cardiovascular system. Mediates biosynthesis of coenzyme Q10 in the Golgi membrane, leading to protect cardiovascular tissues from nos3/eNOS-dependent oxidative stress. The chain is UbiA prenyltransferase domain-containing protein 1 (ubiad1) from Danio rerio (Zebrafish).